Here is a 409-residue protein sequence, read N- to C-terminus: NADH-quinone oxidoreductase subunit D (409 aa).

This sequence belongs to the complex I 49 kDa subunit family. As to quaternary structure, NDH-1 is composed of 14 different subunits. Subunits NuoB, C, D, E, F, and G constitute the peripheral sector of the complex.

The protein localises to the cell inner membrane. It catalyses the reaction a quinone + NADH + 5 H(+)(in) = a quinol + NAD(+) + 4 H(+)(out). NDH-1 shuttles electrons from NADH, via FMN and iron-sulfur (Fe-S) centers, to quinones in the respiratory chain. The immediate electron acceptor for the enzyme in this species is believed to be ubiquinone. Couples the redox reaction to proton translocation (for every two electrons transferred, four hydrogen ions are translocated across the cytoplasmic membrane), and thus conserves the redox energy in a proton gradient. The protein is NADH-quinone oxidoreductase subunit D of Campylobacter curvus (strain 525.92).